The primary structure comprises 259 residues: Chaplin-C (259 aa).

The N-terminal stretch at 1 to 28 (MRQATRKGLMTMAAATGVIAAAGGAAHA) is a signal peptide. In terms of domain architecture, Chaplin 1 spans 39–79 (SPGVLSGNTVQAPVHVPVNVCGNTVDVVGVLNPAMGNACAN). A compositionally biased stretch (gly residues) spans 84-112 (ASGGHGGHGGHGGYGDSGGEGGSHGGSHA). 2 disordered regions span residues 84–129 (ASGG…NHVE) and 154–227 (GNDC…ALAE). In terms of domain architecture, Chaplin 2 spans 119-159 (SPGVGSGNHVEVPIDVPVNVCGNSIDVVGALNPTTGNDCGN). The span at 180 to 189 (HNPGNPGNPD) shows a compositional bias: low complexity. The LPXTG sorting signal motif lies at 225–229 (LAETG). Residue T228 is modified to Pentaglycyl murein peptidoglycan amidated threonine. A propeptide spans 229–259 (GSDLPLGLALPVGAGALLAGTVLYRKARASV) (removed by sortase).

This sequence belongs to the chaplin family. Long chaplin subfamily.

The protein localises to the secreted. It is found in the cell wall. One of 8 partially redundant surface-active proteins required for efficient formation of aerial mycelium; the short chaplins assemble into a hydrophobic, amyloidal fibrillar surface layer that envelopes and protects aerial hyphae and spores, presumably anchored to the long chaplins. Chaplins have an overlapping function with the surface-active SapB peptide; chaplins are essential on minimal medium while on rich medium both chaplins and SapB are required for efficient aerial hyphae formation. A minimal chaplin strain capable of forming aerial mycelium/hyphae on minimal medium contains ChpC, ChpE and ChpH. The strain also has restored rodlet formation on the hyphae surface. The long chaplins (ChpA, ChpB, ChpC) are not absolutely necessary for short chaplin localization or rodlet formation, but probably play a role in initiating aerial hyphae development. Chaplins are also involved in cell attachment to a hydrophobic surface. The protein is Chaplin-C of Streptomyces coelicolor (strain ATCC BAA-471 / A3(2) / M145).